The following is a 586-amino-acid chain: Arginine--tRNA ligase (586 aa).

The 'HIGH' region motif lies at 130–140 (ANPTGPMHVGH).

Belongs to the class-I aminoacyl-tRNA synthetase family. Monomer.

It localises to the cytoplasm. The enzyme catalyses tRNA(Arg) + L-arginine + ATP = L-arginyl-tRNA(Arg) + AMP + diphosphate. In Methylobacterium sp. (strain 4-46), this protein is Arginine--tRNA ligase.